A 94-amino-acid chain; its full sequence is MLKLNLQFFASKKGVSSTKNGRDSESKRLGAKRADGQFVTGGSILYRQRGTKIYPGENVGRGGDDTLFAKIDGVVKFERKGRDKKQVSVYAVAE.

A propeptide spanning residues 1–9 (MLKLNLQFF) is cleaved from the precursor.

It belongs to the bacterial ribosomal protein bL27 family. The N-terminus is cleaved by ribosomal processing cysteine protease Prp.

The sequence is that of Large ribosomal subunit protein bL27 from Staphylococcus aureus (strain Mu3 / ATCC 700698).